A 249-amino-acid polypeptide reads, in one-letter code: Isoprenyl transferase (249 aa).

D25 is a catalytic residue. Residue D25 participates in Mg(2+) binding. Substrate contacts are provided by residues 26-29, W30, R38, H42, and 70-72; these read GNGR and STE. N73 serves as the catalytic Proton acceptor. Substrate is bound by residues W74, R76, R197, and 203-205; that span reads RLS. E216 provides a ligand contact to Mg(2+).

This sequence belongs to the UPP synthase family. As to quaternary structure, homodimer. The cofactor is Mg(2+).

Catalyzes the condensation of isopentenyl diphosphate (IPP) with allylic pyrophosphates generating different type of terpenoids. The sequence is that of Isoprenyl transferase from Streptococcus pyogenes serotype M6 (strain ATCC BAA-946 / MGAS10394).